The sequence spans 169 residues: Small ribosomal subunit protein uS9 (169 aa).

Disordered stretches follow at residues 1–29 (MVEPTGIEDVQEYDENSEEYPAEYTTETP) and 128–169 (MDPE…YSKR). Positions 9–21 (DVQEYDENSEEYP) are enriched in acidic residues. The segment covering 150–169 (VERKKAGLKKARKAPQYSKR) has biased composition (basic residues).

It belongs to the universal ribosomal protein uS9 family.

This Thermobifida fusca (strain YX) protein is Small ribosomal subunit protein uS9.